The primary structure comprises 305 residues: Alpha-N-acetylgalactosaminide alpha-2,6-sialyltransferase 3 (305 aa).

At 1-8 the chain is on the cytoplasmic side; that stretch reads MACILKRK. Residues 9–28 traverse the membrane as a helical; Signal-anchor for type II membrane protein segment; that stretch reads SVIAVSFIAAFLFLLVVRLV. Topologically, residues 29–305 are lumenal; it reads NEVNFPLLLN…IFTHPNWTLS (277 aa). C80 and C229 are disulfide-bonded. N-linked (GlcNAc...) asparagine glycosylation is found at N148, N239, and N301.

This sequence belongs to the glycosyltransferase 29 family. In terms of tissue distribution, expressed in brain and kidney. Observed in the epithelium of the proximal tubules, marginal expression was also found in the distal tubules and collecting tubules.

It is found in the golgi apparatus membrane. The catalysed reaction is an alpha-Neu5Ac-(2-&gt;3)-beta-D-Gal-(1-&gt;3)-D-GlcNAc derivative + CMP-N-acetyl-beta-neuraminate = an alpha-Neu5Ac-(2-&gt;3)-beta-D-Gal-(1-&gt;3)-[alpha-Neu5Ac-(2-&gt;6)]-D-GlcNAc derivative + CMP + H(+). The enzyme catalyses a ganglioside GM1b (d18:1(4E)) + CMP-N-acetyl-beta-neuraminate = a ganglioside GD1alpha (d18:1(4E)) + CMP + H(+). It catalyses the reaction a globoside MSGG + CMP-N-acetyl-beta-neuraminate = a globoside DSGG + CMP + H(+). It carries out the reaction 3-O-[alpha-Neu5Ac-(2-&gt;3)-beta-D-Gal-(1-&gt;3)-alpha-D-GalNAc]-L-Ser-[protein] + CMP-N-acetyl-beta-neuraminate = a 3-O-{alpha-Neu5Ac-(2-&gt;3)-beta-D-Gal-(1-&gt;3)-[alpha-Neu5Ac-(2-&gt;6)]-alpha-D-GalNAc}-L-seryl-[protein] + CMP + H(+). The catalysed reaction is 3-O-[alpha-Neu5Ac-(2-&gt;3)-beta-D-Gal-(1-&gt;3)-alpha-D-GalNAc]-L-Thr-[protein] + CMP-N-acetyl-beta-neuraminate = a 3-O-{alpha-Neu5Ac-(2-&gt;3)-beta-D-Gal-(1-&gt;3)-[alpha-Neu5Ac-(2-&gt;6)]-alpha-D-GalNAc}-L-threonyl-[protein] + CMP + H(+). Its pathway is protein modification; protein glycosylation. The protein operates within glycolipid biosynthesis. In terms of biological role, transfers the sialyl group (N-acetyl-alpha-neuraminyl or NeuAc) from CMP-NeuAc to the GalNAc residue on the NeuAc-alpha-2,3-Gal-beta-1,3-GalNAc sequence of glycoproteins and glycolipids forming an alpha-2,6-linkage. Produces branched type disialyl structures by transfer of a sialyl group onto a GalNAc residue inside the backbone core chains. ST6GalNAcIII prefers glycolipids to glycoproteins, predominantly catalyzing the biosynthesis of ganglioside GD1alpha from GM1b. GD1alpha is a critical molecule in the communication and interaction between neuronal cells and their supportive cells, particularly in brain tissues, and functions as an adhesion molecule in the process of metastasis. Sialylation of glycoproteins or glycosphingolipids is very important in tumor development, neuronal development, nerve repair, immunological processes and regulation of hormone sensitivity. This is Alpha-N-acetylgalactosaminide alpha-2,6-sialyltransferase 3 (ST6GALNAC3) from Homo sapiens (Human).